The following is a 321-amino-acid chain: Cytochrome c biogenesis protein CcsA (321 aa).

Helical transmembrane passes span 17–37, 48–68, 71–91, 98–118, 143–163, 225–245, 259–273, and 286–306; these read VVSI…FVGL, TFFC…HLPI, LYES…VPYF, LSTI…WGLL, MVSG…LLVI, ILSI…VWAN, TWAF…IYFH, and AIVA…VNLL.

It belongs to the CcmF/CycK/Ccl1/NrfE/CcsA family. In terms of assembly, may interact with Ccs1.

It is found in the plastid. Its subcellular location is the chloroplast thylakoid membrane. In terms of biological role, required during biogenesis of c-type cytochromes (cytochrome c6 and cytochrome f) at the step of heme attachment. The protein is Cytochrome c biogenesis protein CcsA of Populus alba (White poplar).